Reading from the N-terminus, the 230-residue chain is Ribonuclease 3 (230 aa).

An RNase III domain is found at 19–134; sequence ELLTIALTHR…LLGAIYLEHG (116 aa). Residue Glu-44 coordinates Mg(2+). Asp-48 is a catalytic residue. Asp-120 and Glu-123 together coordinate Mg(2+). Residues 161–229 form the DRBM domain; the sequence is DWKSSLQELT…AASAYKTLDE (69 aa).

This sequence belongs to the ribonuclease III family. In terms of assembly, homodimer. Mg(2+) serves as cofactor.

It is found in the cytoplasm. The enzyme catalyses Endonucleolytic cleavage to 5'-phosphomonoester.. Its function is as follows. Digests double-stranded RNA. Involved in the processing of primary rRNA transcript to yield the immediate precursors to the all rRNAs (23S, 16S and 5S). Processes some mRNAs, and tRNAs when they are encoded in the rRNA operon. Processes pre-crRNA and tracrRNA of type II CRISPR loci if present in the organism. This chain is Ribonuclease 3 (rnc), found in Mycolicibacterium smegmatis (strain ATCC 700084 / mc(2)155) (Mycobacterium smegmatis).